The primary structure comprises 267 residues: Zein-alpha Z4 (267 aa).

Positions methionine 1 to alanine 21 are cleaved as a signal peptide.

It belongs to the zein family.

In terms of biological role, zeins are major seed storage proteins. This is Zein-alpha Z4 from Zea mays (Maize).